We begin with the raw amino-acid sequence, 144 residues long: Large ribosomal subunit protein uL16m (144 aa).

This sequence belongs to the universal ribosomal protein uL16 family.

Its subcellular location is the mitochondrion. In Dictyostelium discoideum (Social amoeba), this protein is Large ribosomal subunit protein uL16m (mrpl16).